Here is a 228-residue protein sequence, read N- to C-terminus: Thrombin-like enzyme gyroxin analog (228 aa).

A Peptidase S1 domain is found at V1–A222. 6 disulfides stabilise this stretch: C7-C138, C28-C44, C78-C227, C117-C183, C149-C162, and C173-C198. H43 serves as the catalytic Charge relay system. 2 N-linked (GlcNAc...) asparagine glycosylation sites follow: N45 and N81. D88 functions as the Charge relay system in the catalytic mechanism. N-linked (GlcNAc...) asparagine glycosylation is present at N145. S177 serves as the catalytic Charge relay system. A glycan (N-linked (GlcNAc...) asparagine) is linked at N224.

It belongs to the peptidase S1 family. Snake venom subfamily. As to quaternary structure, monomer. Expressed by the venom gland.

The protein resides in the secreted. It catalyses the reaction Selective cleavage of Arg-|-Xaa bond in fibrinogen, to form fibrin, and release fibrinopeptide A. The specificity of further degradation of fibrinogen varies with species origin of the enzyme.. Inhibited competitively by amidines and guanidines, and irreversibly inhibited by diisopropylfluorophosphate. Its function is as follows. Thrombin-like snake venom serine protease, that cleaves alpha-chain of fibrinogen (FGA) releases only fibrinopeptide A. Shows coagulant, esterase and amidase activities. Induces the barrel rotation syndrome in mice, which is manifested by gyroxin-like, rapid rolling motions. May also reversibly increase the permeability of the blood brain barrier (BBB) in mice. In Lachesis muta muta (Bushmaster), this protein is Thrombin-like enzyme gyroxin analog.